A 152-amino-acid polypeptide reads, in one-letter code: Calcium-binding protein SPEC 1A (152 aa).

EF-hand domains follow at residues 10–45 (EEVTEFKRRFKNKDTDKSKSITAEELGEFFKSTGKS), 46–81 (YTDKQIDKMISDVDTDESGTIDFSEMLMGIAEQMVK), 84–119 (WKEEHYTKAFDDMDKDGNGSLSPQELREALSASKPP), and 120–152 (MKRKKIKAIIQKADANKDGKIDREEFMKLIKSC). Ca(2+) contacts are provided by D23, D25, S27, S29, E34, D59, D61, S63, T65, E70, D97, D99, N101, S103, E108, D133, N135, D137, K139, and E144. The tract at residues 95 to 121 (DMDKDGNGSLSPQELREALSASKPPMK) is disordered.

Found in cell lineages giving rise to the aboral ectoderm, a squamous epithelium covering the surface of the late stage embryo and larva.

Functionally, calcium-binding protein involved in larval development and metamorphosis. Likely to function as calcium buffers mediating the transport of calcium from the sea water to the blastocoel where calcium is required for skeleton formation. The sequence is that of Calcium-binding protein SPEC 1A (SPEC1) from Strongylocentrotus purpuratus (Purple sea urchin).